Here is a 572-residue protein sequence, read N- to C-terminus: MTEPRHESGSAAPQRPATDPVQRQVNLLRDQKRNLDKQAAALASQNEKLVRLLNASRQEIVGLKKTLAAEAEPPATYAVVLQVNHGRRPVGEATGDGPVVTGPTLDVLAAGRRMRVAVSPLVSFGACEPGLGVLLNENYVVVALLEYERTGEVATVKEVVDHDRVLTVGRSDEERVLLLSGRLRRERPKPGDAVTVDHRTGFALEPVTRTDVEQLVLEEVPDVSYTDIGGLGPQIEAIRDAVELPHVHPEIFREHGLRPPKGILLYGPPGNGKTLIAKAVARSLAERSAAKAGRSRPEGYFLNIKGPELLDKYVGETERQIRSIFANAREQAARGVPVVVFFDEMDSLFRVRGSGLSSDVETTIVPQLLTEIDGVEQLDNVMVVGATNREDMIDPAVLRPGRLDVKIRIDRPDREGAREIFSLYLTPDLPLRDEDVARAGSRALAAEELVAAAVQRMYAREPETEFLTIGYRNGTSETLYFSDYASGAVIRNVVDRAKKQAIKTLLTTGRRGITAEHLVAAVDEEFHEQQDLPDTEDSEDWARLTGRRGDTIDSVHMASHRPQGEPGPGATP.

The disordered stretch occupies residues 1–22 (MTEPRHESGSAAPQRPATDPVQ). Positions 21–67 (VQRQVNLLRDQKRNLDKQAAALASQNEKLVRLLNASRQEIVGLKKTL) form a coiled coil. Residue 270-275 (GNGKTL) coordinates ATP. A compositionally biased stretch (acidic residues) spans 527-539 (HEQQDLPDTEDSE). Positions 527–572 (HEQQDLPDTEDSEDWARLTGRRGDTIDSVHMASHRPQGEPGPGATP) are disordered.

Belongs to the AAA ATPase family. As to quaternary structure, homohexamer. Assembles into a hexameric ring structure.

In Kocuria rhizophila (strain ATCC 9341 / DSM 348 / NBRC 103217 / DC2201), this protein is AAA ATPase forming ring-shaped complexes.